The sequence spans 172 residues: Calcium channel flower homolog (172 aa).

The Cytoplasmic segment spans residues 1–32 (MSSSGGAPGASASSAPPAQEEGMTWWYRWLCR). Residues 33–53 (LSGVLGAVSCAISGLFNCITI) form a helical membrane-spanning segment. Topologically, residues 54 to 57 (HPLN) are extracellular. Residues 58–78 (IAAGVWMIMNAFILLLCEAPF) traverse the membrane as a helical segment. Residues 79–102 (CCQFIEFANTVAEKVDRLRSWQKA) are Cytoplasmic-facing. The chain crosses the membrane as a helical span at residues 103 to 123 (VFYCGMAVVPIVISLTLTTLL). Residues 124–125 (GN) are Extracellular-facing. Residues 126–142 (AIAFATGVLYGLSALGK) form a helical membrane-spanning segment. The Cytoplasmic portion of the chain corresponds to 143-172 (KGDAISYARIQQQRQQADEEKLAETLEGEL).

This sequence belongs to the calcium channel flower family. Interacts with adaptor protein complex 2 (AP-2). In terms of tissue distribution, detected in skin cells at low levels of expression (at protein level).

The protein localises to the cell membrane. The protein resides in the cytoplasmic vesicle. Its subcellular location is the secretory vesicle. It localises to the synaptic vesicle. It is found in the golgi apparatus. The protein localises to the vesicle. The protein resides in the early endosome. Its subcellular location is the recycling endosome. It localises to the endoplasmic reticulum membrane. Its function is as follows. Transmembrane protein which mediates synaptic endocytosis and fitness-based cell culling. In response to different stimulus strengths, controls two major modes of synaptic vesicle (SV) retrieval in hippocampal neurons; Clathrin-mediated endocytosis (CME) in response to mild stimulation and activity-dependent bulk endocytosis (ADBE) in response to strong stimulation. In cytotoxic T-lymphoocytes (CTLs) facilitates calcium-dependent endocytosis of cytotoxic granules at the immuno synapse. Different isoforms work as fitness fingerprints in 'loser' and 'winner' cells and thereby mediate win/lose decisions as part of the cell competition process. Functionally, functions with the other flower isoforms to produce tissue-specific fitness fingerprints that identify unfit or fit cells during cell selection processes in order to maintain tissue health. During cell competition, if levels of this isoform in cells is higher than in the surrounding neighboring cells, the cells are recognized as 'winner' cells, and do not undergo elimination via apoptosis. In terms of biological role, functions with the other flower isoforms to produce tissue-specific fitness fingerprints that identify unfit or fit cells during cell selection processes in order to maintain tissue health. During cell competition, if levels of this isoform in unfit cells is higher than in the surrounding neighboring cells, the cells are recognized as 'loser' cells, and undergo elimination via apoptosis to be replaced by the surrounding healthy 'winner' cell population. This is Calcium channel flower homolog (CACFD1) from Homo sapiens (Human).